The primary structure comprises 245 residues: 1-(5-phosphoribosyl)-5-[(5-phosphoribosylamino)methylideneamino] imidazole-4-carboxamide isomerase (245 aa).

Asp-7 (proton acceptor) is an active-site residue. Residue Asp-129 is the Proton donor of the active site.

Belongs to the HisA/HisF family.

The protein resides in the cytoplasm. The catalysed reaction is 1-(5-phospho-beta-D-ribosyl)-5-[(5-phospho-beta-D-ribosylamino)methylideneamino]imidazole-4-carboxamide = 5-[(5-phospho-1-deoxy-D-ribulos-1-ylimino)methylamino]-1-(5-phospho-beta-D-ribosyl)imidazole-4-carboxamide. The protein operates within amino-acid biosynthesis; L-histidine biosynthesis; L-histidine from 5-phospho-alpha-D-ribose 1-diphosphate: step 4/9. The protein is 1-(5-phosphoribosyl)-5-[(5-phosphoribosylamino)methylideneamino] imidazole-4-carboxamide isomerase of Shewanella sp. (strain W3-18-1).